Here is a 361-residue protein sequence, read N- to C-terminus: Prostaglandin D2 receptor (361 aa).

The Extracellular portion of the chain corresponds to 1–21; that stretch reads MRPLFYRCHNTTSVEKGNSAT. N-linked (GlcNAc...) asparagine glycosylation occurs at Asn10. The chain crosses the membrane as a helical span at residues 22 to 42; it reads MGGVLFSTGLVGNLLALGLLA. Topologically, residues 43–58 are cytoplasmic; it reads RSGLGSCPPRSPRPPP. Residues 59-79 traverse the membrane as a helical segment; the sequence is SVFYVLVFGLTITDLLGKCLV. Over 80-107 the chain is Extracellular; it reads SPFVLSAYAQNRSLRELVPGSDSSLCQA. The N-linked (GlcNAc...) asparagine glycan is linked to Asn90. Cys105 and Cys183 are oxidised to a cystine. A helical membrane pass occupies residues 108 to 128; the sequence is FAFIMSFFGLASTLQLLAMAL. Over 129–150 the chain is Cytoplasmic; it reads ECWLSLGHPFFHRRHLTPRRGA. A helical transmembrane segment spans residues 151–171; sequence MVAPVVGAFCLAFCALPLVGF. The Extracellular segment spans residues 172–195; that stretch reads GKFVQYCPGTWCFFQMVHEERSLS. The chain crosses the membrane as a helical span at residues 196-216; that stretch reads VLSYSVLYASLMLLLVLAIVL. Topologically, residues 217–262 are cytoplasmic; the sequence is CNLSAMRNLYAMHLRLRGLLRPGSRERAEPGAGEREATPLHLEELD. Residues 263–283 traverse the membrane as a helical segment; it reads HLLLLALMTVLFTMCSLPLIY. Over 284 to 310 the chain is Extracellular; the sequence is RAYYGAFKAVPEQNGTTEETEDLRALR. An N-linked (GlcNAc...) asparagine glycan is attached at Asn297. The helical transmembrane segment at 311-331 threads the bilayer; it reads FLSVISIVDPWIFIIFRTSVF. Residues 332–361 lie on the Cytoplasmic side of the membrane; the sequence is RMFFRKIFIRPLIYRNWHSNSCQTNMESSL.

This sequence belongs to the G-protein coupled receptor 1 family.

Its subcellular location is the cell membrane. Functionally, receptor for prostaglandin D2 (PGD2). The activity of this receptor is mainly mediated by G(s) proteins that stimulate adenylate cyclase, resulting in an elevation of intracellular cAMP. A mobilization of calcium is also observed, but without formation of inositol 1,4,5-trisphosphate. Involved in PLA2G3-dependent maturation of mast cells. PLA2G3 is secreted by immature mast cells and acts on nearby fibroblasts upstream to PTDGS to synthesize PGD2, which in turn promotes mast cell maturation and degranulation via PTGDR. The sequence is that of Prostaglandin D2 receptor (PTGDR) from Bos taurus (Bovine).